The following is a 333-amino-acid chain: L-lactate dehydrogenase A chain (333 aa).

Position 2 is an N-acetylalanine (A2). NAD(+) is bound by residues G30–K58 and R100. Residues R107, N139, and R170 each coordinate substrate. N139 provides a ligand contact to NAD(+). The active-site Proton acceptor is H194. Residue T249 coordinates substrate.

It belongs to the LDH/MDH superfamily. LDH family. Homotetramer.

The protein localises to the cytoplasm. The catalysed reaction is (S)-lactate + NAD(+) = pyruvate + NADH + H(+). It functions in the pathway fermentation; pyruvate fermentation to lactate; (S)-lactate from pyruvate: step 1/1. Its function is as follows. Interconverts simultaneously and stereospecifically pyruvate and lactate with concomitant interconversion of NADH and NAD(+). This Squalus acanthias (Spiny dogfish) protein is L-lactate dehydrogenase A chain (ldha).